A 530-amino-acid polypeptide reads, in one-letter code: Autoinducer-2 kinase (530 aa).

The protein belongs to the FGGY kinase family.

The protein resides in the cytoplasm. It carries out the reaction (S)-4,5-dihydroxypentane-2,3-dione + ATP = (2S)-2-hydroxy-3,4-dioxopentyl phosphate + ADP + H(+). Its function is as follows. Catalyzes the phosphorylation of autoinducer-2 (AI-2) to phospho-AI-2, which subsequently inactivates the transcriptional regulator LsrR and leads to the transcription of the lsr operon. Phosphorylates the ring-open form of (S)-4,5-dihydroxypentane-2,3-dione (DPD), which is the precursor to all AI-2 signaling molecules, at the C5 position. This is Autoinducer-2 kinase from Escherichia coli (strain ATCC 8739 / DSM 1576 / NBRC 3972 / NCIMB 8545 / WDCM 00012 / Crooks).